Reading from the N-terminus, the 329-residue chain is MQGSVTEFLRPRLVDIEQVNPTRAKVTLEPLERGFGHTLGNALRRILLSSMPGCAVTEVEIDGVLHEYSSKEGVQEDILEILLNLKGLAVVIEGKDEAMLTLSKSGAGPVTAADITHDGDVTIMNPEHVVCHLTGNNEISMRIRVERGRGYVPASARAQTEDDDRPIGRLLVDASFSPVARIAYNVEAARVEQRTDLDKLVIDMTTNGTLDPEEAIRRAATILAEQLDAFVELRDVTEPEQKEEKPEFDPILLRPVDDLELTVRSANCLKAEAIHYIGDLVQRTEVELLKTPNLGKKSLTEIKDVLASRGLSLGMRLENWPPASLVDDL.

The segment at 1–234 (MQGSVTEFLR…EQLDAFVELR (234 aa)) is alpha N-terminal domain (alpha-NTD). Residues 248–329 (FDPILLRPVD…WPPASLVDDL (82 aa)) are alpha C-terminal domain (alpha-CTD).

It belongs to the RNA polymerase alpha chain family. Homodimer. The RNAP catalytic core consists of 2 alpha, 1 beta, 1 beta' and 1 omega subunit. When a sigma factor is associated with the core the holoenzyme is formed, which can initiate transcription.

The catalysed reaction is RNA(n) + a ribonucleoside 5'-triphosphate = RNA(n+1) + diphosphate. Functionally, DNA-dependent RNA polymerase catalyzes the transcription of DNA into RNA using the four ribonucleoside triphosphates as substrates. The sequence is that of DNA-directed RNA polymerase subunit alpha from Shewanella violacea (strain JCM 10179 / CIP 106290 / LMG 19151 / DSS12).